A 138-amino-acid polypeptide reads, in one-letter code: ATP synthase epsilon chain (138 aa).

The protein belongs to the ATPase epsilon chain family. As to quaternary structure, F-type ATPases have 2 components, CF(1) - the catalytic core - and CF(0) - the membrane proton channel. CF(1) has five subunits: alpha(3), beta(3), gamma(1), delta(1), epsilon(1). CF(0) has three main subunits: a, b and c.

It is found in the cell inner membrane. In terms of biological role, produces ATP from ADP in the presence of a proton gradient across the membrane. The protein is ATP synthase epsilon chain of Delftia acidovorans (strain DSM 14801 / SPH-1).